The primary structure comprises 273 residues: Dermonecrotic toxin (273 aa).

Residues glutamate 20 and aspartate 22 each coordinate Mg(2+). Histidine 35 (nucleophile) is an active-site residue. Cysteine 39 and cysteine 45 form a disulfide bridge. Aspartate 79 provides a ligand contact to Mg(2+).

This sequence belongs to the arthropod phospholipase D family. Class I subfamily. Mg(2+) serves as cofactor. As to expression, expressed by the venom gland.

It localises to the secreted. It carries out the reaction an N-(acyl)-sphingosylphosphocholine = an N-(acyl)-sphingosyl-1,3-cyclic phosphate + choline. The catalysed reaction is an N-(acyl)-sphingosylphosphoethanolamine = an N-(acyl)-sphingosyl-1,3-cyclic phosphate + ethanolamine. It catalyses the reaction a 1-acyl-sn-glycero-3-phosphocholine = a 1-acyl-sn-glycero-2,3-cyclic phosphate + choline. The enzyme catalyses a 1-acyl-sn-glycero-3-phosphoethanolamine = a 1-acyl-sn-glycero-2,3-cyclic phosphate + ethanolamine. In terms of biological role, dermonecrotic toxins cleave the phosphodiester linkage between the phosphate and headgroup of certain phospholipids (sphingolipid and lysolipid substrates), forming an alcohol (often choline) and a cyclic phosphate. This toxin acts on sphingomyelin (SM). It may also act on ceramide phosphoethanolamine (CPE), lysophosphatidylcholine (LPC) and lysophosphatidylethanolamine (LPE), but not on lysophosphatidylserine (LPS), and lysophosphatidylglycerol (LPG). It acts by transphosphatidylation, releasing exclusively cyclic phosphate products as second products. Induces dermonecrosis, hemolysis, increased vascular permeability, edema, inflammatory response, and platelet aggregation. In Loxosceles laeta (South American recluse spider), this protein is Dermonecrotic toxin.